The following is a 119-amino-acid chain: Large ribosomal subunit protein bL20 (119 aa).

It belongs to the bacterial ribosomal protein bL20 family.

Functionally, binds directly to 23S ribosomal RNA and is necessary for the in vitro assembly process of the 50S ribosomal subunit. It is not involved in the protein synthesizing functions of that subunit. The polypeptide is Large ribosomal subunit protein bL20 (Halalkalibacterium halodurans (strain ATCC BAA-125 / DSM 18197 / FERM 7344 / JCM 9153 / C-125) (Bacillus halodurans)).